A 660-amino-acid chain; its full sequence is DNA primase (660 aa).

A CHC2-type zinc finger spans residues 40–64; the sequence is CPFHKEKTPSFTVSPDKQFYYCFGC. The interval 94–115 is disordered; it reads GMEVPREQGRRDQKPRQPTDSP. The span at 97-110 shows a compositional bias: basic and acidic residues; sequence VPREQGRRDQKPRQ. The region spanning 261-343 is the Toprim domain; that stretch reads DEIIVVEGYM…GRRARFLFLP (83 aa). Mg(2+) is bound by residues glutamate 267, aspartate 311, and aspartate 313. Disordered regions lie at residues 425–449 and 476–519; these read DPQQVEQLAQQAPATSSMPDYDPGY and QAWK…APVE. The segment covering 428–442 has biased composition (polar residues); the sequence is QVEQLAQQAPATSSM. Positions 488-498 are enriched in basic and acidic residues; the sequence is PWSDKPWDKNR.

It belongs to the DnaG primase family. In terms of assembly, monomer. Interacts with DnaB. It depends on Zn(2+) as a cofactor. Mg(2+) is required as a cofactor.

It carries out the reaction ssDNA + n NTP = ssDNA/pppN(pN)n-1 hybrid + (n-1) diphosphate.. Its function is as follows. RNA polymerase that catalyzes the synthesis of short RNA molecules used as primers for DNA polymerase during DNA replication. This chain is DNA primase, found in Pseudomonas putida (strain ATCC 47054 / DSM 6125 / CFBP 8728 / NCIMB 11950 / KT2440).